The chain runs to 138 residues: Large ribosomal subunit protein uL16 (138 aa).

Residues Met-1 to Ser-16 are compositionally biased toward basic residues. The segment at Met-1–Thr-25 is disordered.

Belongs to the universal ribosomal protein uL16 family. In terms of assembly, part of the 50S ribosomal subunit.

Functionally, binds 23S rRNA and is also seen to make contacts with the A and possibly P site tRNAs. In Rhodococcus jostii (strain RHA1), this protein is Large ribosomal subunit protein uL16.